Here is a 515-residue protein sequence, read N- to C-terminus: 1-pyrroline-5-carboxylate dehydrogenase (515 aa).

Residues Glu286 and Cys320 contribute to the active site.

It belongs to the aldehyde dehydrogenase family. RocA subfamily.

It catalyses the reaction L-glutamate 5-semialdehyde + NAD(+) + H2O = L-glutamate + NADH + 2 H(+). Its pathway is amino-acid degradation; L-proline degradation into L-glutamate; L-glutamate from L-proline: step 2/2. In Oceanobacillus iheyensis (strain DSM 14371 / CIP 107618 / JCM 11309 / KCTC 3954 / HTE831), this protein is 1-pyrroline-5-carboxylate dehydrogenase.